The sequence spans 362 residues: UDP-3-O-acylglucosamine N-acyltransferase (362 aa).

His-251 (proton acceptor) is an active-site residue.

Belongs to the transferase hexapeptide repeat family. LpxD subfamily. Homotrimer.

The catalysed reaction is a UDP-3-O-[(3R)-3-hydroxyacyl]-alpha-D-glucosamine + a (3R)-hydroxyacyl-[ACP] = a UDP-2-N,3-O-bis[(3R)-3-hydroxyacyl]-alpha-D-glucosamine + holo-[ACP] + H(+). Its pathway is bacterial outer membrane biogenesis; LPS lipid A biosynthesis. Its function is as follows. Catalyzes the N-acylation of UDP-3-O-acylglucosamine using 3-hydroxyacyl-ACP as the acyl donor. Is involved in the biosynthesis of lipid A, a phosphorylated glycolipid that anchors the lipopolysaccharide to the outer membrane of the cell. The polypeptide is UDP-3-O-acylglucosamine N-acyltransferase (Cupriavidus pinatubonensis (strain JMP 134 / LMG 1197) (Cupriavidus necator (strain JMP 134))).